Here is a 284-residue protein sequence, read N- to C-terminus: Ribosomal RNA small subunit methyltransferase A (284 aa).

Residues asparagine 12, leucine 14, glycine 38, glutamate 59, aspartate 81, and asparagine 106 each coordinate S-adenosyl-L-methionine.

This sequence belongs to the class I-like SAM-binding methyltransferase superfamily. rRNA adenine N(6)-methyltransferase family. RsmA subfamily.

It localises to the cytoplasm. It carries out the reaction adenosine(1518)/adenosine(1519) in 16S rRNA + 4 S-adenosyl-L-methionine = N(6)-dimethyladenosine(1518)/N(6)-dimethyladenosine(1519) in 16S rRNA + 4 S-adenosyl-L-homocysteine + 4 H(+). Functionally, specifically dimethylates two adjacent adenosines (A1518 and A1519) in the loop of a conserved hairpin near the 3'-end of 16S rRNA in the 30S particle. May play a critical role in biogenesis of 30S subunits. This Phytoplasma australiense protein is Ribosomal RNA small subunit methyltransferase A.